A 1430-amino-acid polypeptide reads, in one-letter code: 3'-5' RNA helicase YTHDC2 (1430 aa).

A disordered region spans residues 1–37 (MSRPSSVSPRQPAPGGGGGGGPSPCGPGGGGRAKGLK). The span at 14 to 33 (PGGGGGGGPSPCGPGGGGRA) shows a compositional bias: gly residues. Positions 38–106 (DIRIDEEVKI…NRYLTVKKKD (69 aa)) constitute an R3H domain. Residues 203–369 (VKIIKENKVV…FGSCPVIYIQ (167 aa)) form the Helicase ATP-binding domain. 216 to 223 (GETGSGKT) serves as a coordination point for ATP. Residues 316–319 (DEVH) carry the DEAH box motif. ANK repeat units follow at residues 506 to 538 (TSAT…SKAS) and 539 to 571 (NGWM…FGNL). Positions 612–784 (LLYNICHSCD…ELCLHTKLLA (173 aa)) constitute a Helicase C-terminal domain. S1089, S1090, and S1092 each carry phosphoserine. The span at 1164-1174 (EQSAGLQQPSG) shows a compositional bias: polar residues. The disordered stretch occupies residues 1164–1288 (EQSAGLQQPS…SPSPRPNMPV (125 aa)). A compositionally biased stretch (low complexity) spans 1191 to 1200 (SSWRSNNSRK). Residue S1202 is modified to Phosphoserine. Positions 1231-1249 (KYKDRGILHPKRGTEDRSD) are enriched in basic and acidic residues. Over residues 1250-1264 (QSSLKSTDSSSYPSP) the composition is skewed to low complexity. S1263, S1267, and S1281 each carry phosphoserine. Positions 1288–1418 (VRYFIMKSSN…LVGEQLLQLW (131 aa)) constitute a YTH domain. RNA is bound by residues 1294-1296 (KSS), W1310, and W1360.

It belongs to the DEAD box helicase family. DEAH subfamily. Interacts with MEIOC; binds transcripts that regulate the mitotic cell cycle inhibiting progression into metaphase, thereby allowing meiotic prophase to proceed normally. Interacts (via ANK repeats) with XRN1. Interacts with ZCCHC4. Associates with the small ribosomal subunit. Interacts with RBM46. Expressed in testis. Not detected in spermatogonia next to the tubule wall but is strongly expressed in spermatocytes, suggesting that it is up-regulated in germ cells upon entry into meiosis.

Its subcellular location is the cytoplasm. It localises to the perinuclear region. The enzyme catalyses ATP + H2O = ADP + phosphate + H(+). Functionally, 3'-5' RNA helicase that plays a key role in the male and female germline by promoting transition from mitotic to meiotic divisions in stem cells. Specifically recognizes and binds N6-methyladenosine (m6A)-containing RNAs, a modification present at internal sites of mRNAs and some non-coding RNAs that plays a role in the efficiency of RNA processing and stability. Essential for ensuring a successful progression of the meiotic program in the germline by regulating the level of m6A-containing RNAs. Acts by binding and promoting degradation of m6A-containing mRNAs: the 3'-5' RNA helicase activity is required for this process and RNA degradation may be mediated by XRN1 exoribonuclease. Required for both spermatogenesis and oogenesis. In Homo sapiens (Human), this protein is 3'-5' RNA helicase YTHDC2.